We begin with the raw amino-acid sequence, 104 residues long: Large ribosomal subunit protein bL21 (104 aa).

It belongs to the bacterial ribosomal protein bL21 family. In terms of assembly, part of the 50S ribosomal subunit. Contacts protein L20.

Its function is as follows. This protein binds to 23S rRNA in the presence of protein L20. In Clostridium tetani (strain Massachusetts / E88), this protein is Large ribosomal subunit protein bL21.